Here is a 135-residue protein sequence, read N- to C-terminus: C-type lectin BpLec (135 aa).

4 cysteine pairs are disulfide-bonded: Cys3–Cys14, Cys31–Cys131, Cys38–Cys133, and Cys106–Cys123. Positions 10-132 constitute a C-type lectin domain; it reads MNGLCYKIFD…CESKNAFLCQ (123 aa). Residues Gln96, Asp98, Glu104, Asn119, and Asp120 each contribute to the Ca(2+) site. The short motif at 96–98 is the Galactose-binding element; sequence QPD.

The protein belongs to the true venom lectin family. Homodimer; disulfide-linked. In terms of tissue distribution, expressed by the venom gland.

It is found in the secreted. Functionally, this lectin displays hemagglutinating activity on dog (128'000 HU/mg) and cat erythrocytes, that is inhibited by beta-galactosides (D-galactose, D-lactose, and N-acetyl-D-galactosamine) and EDTA. In addition, has been shown to hemagglutinate promastigote forms of Leishmania amazonensis. Also inhibits Gram-positive (S.aureus ATCC 25923) (MIC is 31.25 ug/ml) but not Gram-negative (E.coli ATCC 25922) bacteria. Is a calcium-dependent lectin. The sequence is that of C-type lectin BpLec from Bothrops pauloensis (Neuwied's lancehead).